A 324-amino-acid polypeptide reads, in one-letter code: MKLQQLRYIVEVVNHNLNVSSTAEGLYTSQPGISKQVRMLEDELGIQIFARSGKHLTQVTPAGQEIIRIAREVLSKVDAIKSVAGEHTWPDKGSLYVATTHTQARYALPGVIKGFIERYPRVSLHMHQGSPTQIAEAVSKGNADFAIATEALHLYDDLVMLPCYHWNRSIVVTPEHPLATKGSVSIEELAQYPLVTYTFGFTGRSELDTAFNRAGLTPRIVFTATDADVIKTYVRLGLGVGVIASMAVDPVSDPDLVKLDANGIFSHSTTKIGFRRSTFLRSYMYDFIQRFAPHLTRDVVDTAVALRSNEDIEAMFKDIKLPEK.

Residues 1–59 (MKLQQLRYIVEVVNHNLNVSSTAEGLYTSQPGISKQVRMLEDELGIQIFARSGKHLTQV) form the HTH lysR-type domain. A DNA-binding region (H-T-H motif) is located at residues 19–38 (VSSTAEGLYTSQPGISKQVR).

It belongs to the LysR transcriptional regulatory family. As to quaternary structure, homotetramer.

It is found in the cytoplasm. In terms of biological role, this protein is a positive regulator of gene expression for the cysteine regulon. The inducer for CysB is N-acetylserine. Thiosulfate and sulfide act as anti-inducers. This chain is HTH-type transcriptional regulator CysB (cysB), found in Klebsiella pneumoniae.